The sequence spans 104 residues: Pole-localizer protein TmaR (104 aa).

Coiled coils occupy residues 7-34 (IVNQARRKNKLKRELLDNEKKVRDNRKR) and 76-96 (SAEISKARRDISRRIRELTEE).

This sequence belongs to the pole-localizer TmaR family.

The protein localises to the cytoplasm. Its function is as follows. Pole-localizer protein involved in the regulation of several cellular processes. This Vibrio atlanticus (strain LGP32) (Vibrio splendidus (strain Mel32)) protein is Pole-localizer protein TmaR.